A 390-amino-acid polypeptide reads, in one-letter code: Protein dimmed (390 aa).

The interval 24–163 (HNNNNYNTDG…RNMRRLESNE (140 aa)) is disordered. Polar residues-rich tracts occupy residues 29–44 (YNTD…SAEG) and 55–64 (RTSQLSNNTY). N-linked (GlcNAc...) asparagine glycosylation is present at Asn61. Residues 69–78 (TDSSSQSDDT) are compositionally biased toward low complexity. The segment covering 79 to 90 (SGGGGSSNGGGS) has biased composition (gly residues). Over residues 122–141 (PSTIAPNSTSSNSSNANGNA) the composition is skewed to low complexity. Residues Asn128, Asn133, and Asn140 are each glycosylated (N-linked (GlcNAc...) asparagine). Basic and acidic residues predominate over residues 151–163 (AKERNMRRLESNE). One can recognise a bHLH domain in the interval 156 to 208 (MRRLESNERERMRMHSLNDAFQSLREVIPHVEMERRLSKIETLTLAKNYIINL). Asn207 and Asn237 each carry an N-linked (GlcNAc...) asparagine glycan. The segment at 312 to 339 (QQQQASHLPHHQQAMHGHGHLGASIQSQ) is disordered. N-linked (GlcNAc...) asparagine glycosylation is present at Asn347.

Forms homodimers via the bHLH domain. These dimers bind the core E-box sequence. In terms of tissue distribution, detected in the developing nervous system in the bilateral domains in the cephalic region that later on forms part of the ring gland. Concomitantly expressed in the larval central nervous system (CNS), including the dorsal chain neurons as well as several bilateral clusters of neurons: large, midline protocerebral brain cells (MC), lateral protocerebral brain cells (LC), ventral subesophageal neurons (SE) and lateral abdominal neurons, and the transverse nerves. Outside the CNS, detected in at least three classes of endocrine cells: intrinsic cells of the corpora cardiaca, midgut cells, the Inka cells, lateral Bipolar neurons associated with the segmental transverse nerve, and several peptidergic cells of the enteric nervous system. Expressed only in central and peripheral neuroendocrine secretory cells and neurosecretory neurons but not in sensory or motor neurons.

It localises to the cytoplasm. Its function is as follows. Transcription factor that regulates neurosecretory (NS) cell function and neuroendocrine cell fate. Acts as a master regulator of common NS functions such as Phm expression and neuropeptide production. Plays a role as a regulator of peptide-containing large dense-core vesicle (LDCV) production and peptidergic cell differentiation. Controls transcription of FMRFamide in Tv neuronal cells and Fur1 in Ap-let cells (Tvb and dorsal apterous cells). Also required for up-regulation of Phm in Tv and Ap-let cells, and expression of three neuropeptide genes, Ms, FMRFamide and Lk. Influences both regulated and constitutive secretory activity in neuroendocrine cells at embryonic and postembryonic level. Loss of function studies show reduced cellular levels of various neuropeptides and neuropeptide biosynthetic enzymes. This chain is Protein dimmed (dimm), found in Drosophila melanogaster (Fruit fly).